We begin with the raw amino-acid sequence, 343 residues long: Uroporphyrinogen decarboxylase (343 aa).

Substrate contacts are provided by residues 23–27, Asp-73, Tyr-151, Ser-206, and His-322; that span reads RQAGR.

Belongs to the uroporphyrinogen decarboxylase family. Homodimer.

Its subcellular location is the cytoplasm. It carries out the reaction uroporphyrinogen III + 4 H(+) = coproporphyrinogen III + 4 CO2. Its pathway is porphyrin-containing compound metabolism; protoporphyrin-IX biosynthesis; coproporphyrinogen-III from 5-aminolevulinate: step 4/4. In terms of biological role, catalyzes the decarboxylation of four acetate groups of uroporphyrinogen-III to yield coproporphyrinogen-III. The polypeptide is Uroporphyrinogen decarboxylase (Granulibacter bethesdensis (strain ATCC BAA-1260 / CGDNIH1)).